Reading from the N-terminus, the 165-residue chain is Protein SprT (165 aa).

The 142-residue stretch at 22-163 (LAQANLKLGC…RCVHCGEQLV (142 aa)) folds into the SprT-like domain. A Zn(2+)-binding site is contributed by His-78. Glu-79 is an active-site residue. His-82 provides a ligand contact to Zn(2+).

This sequence belongs to the SprT family. The cofactor is Zn(2+).

The protein localises to the cytoplasm. The sequence is that of Protein SprT from Shigella dysenteriae serotype 1 (strain Sd197).